The following is a 428-amino-acid chain: L-glutamyl-[BtrI acyl-carrier protein] decarboxylase (428 aa).

K49 is subject to N6-(pyridoxal phosphate)lysine. Pyridoxal 5'-phosphate contacts are provided by residues G228, 269-272 (ESGR), and Y375. Substrate contacts are provided by R272 and Y375.

Belongs to the Orn/Lys/Arg decarboxylase class-II family. As to quaternary structure, homodimer. Pyridoxal 5'-phosphate serves as cofactor.

It carries out the reaction gamma-L-glutamyl-[BtrI ACP] + H(+) = 4-aminobutanoyl-[BtrI ACP] + CO2. The protein operates within antibiotic biosynthesis; butirosin biosynthesis. Its function is as follows. Pyridoxal phosphate-dependent decarboxylase that catalyzes 1 step in the biosynthesis of the side chain of the aminoglycoside antibiotics in the biosynthetic pathway of butirosin. Able to decarboxylate L-ornithine, L-arginine, L-lysine, but not L-glutamate or any D-amino acids. Has low activity with substrates not bound to an acyl-carrier protein. This chain is L-glutamyl-[BtrI acyl-carrier protein] decarboxylase (btrK), found in Niallia circulans (Bacillus circulans).